The sequence spans 249 residues: Probable transcriptional regulatory protein DICTH_1505 (249 aa).

This sequence belongs to the TACO1 family.

The protein resides in the cytoplasm. In Dictyoglomus thermophilum (strain ATCC 35947 / DSM 3960 / H-6-12), this protein is Probable transcriptional regulatory protein DICTH_1505.